Reading from the N-terminus, the 106-residue chain is Insulin-like peptide 04 (106 aa).

Positions 1–22 (MPRTFLVVLIYILAGFLCSTSA) are cleaved as a signal peptide. The propeptide occupies 23 to 37 (LRKVNEASGIKTDGS). Disulfide bonds link cysteine 45/cysteine 50, cysteine 46/cysteine 80, and cysteine 59/cysteine 68. The propeptide at 86 to 106 (RRKRSLTVDKREAKKFIRQRR) is c peptide.

It belongs to the insulin family.

Its subcellular location is the secreted. Its function is as follows. Insulin decreases blood glucose concentration. May have evolved to activate insulin receptors (INSR) in vertebrates. Molecular docking studies reveals unique interaction with the human insulin receptor. In vivo, insulin-like peptide injection reduces blood glucose levels in two models of zebrafish diabetes (streptozotocin- and glucose-induced). Also shorter swimming distance of zebrafish larvae, an effect which is not observed with human insulin. The chain is Insulin-like peptide 04 from Exaiptasia diaphana (Tropical sea anemone).